A 358-amino-acid polypeptide reads, in one-letter code: Chondroadherin (358 aa).

The first 20 residues, 1-20, serve as a signal peptide directing secretion; the sequence is MARALLFSLVFLAILLPALA. The region spanning 21 to 50 is the LRRNT domain; sequence ACPQNCHCHGDLQHVICDKVGLQKIPKVSE. Cysteines 22 and 37 form a disulfide. LRR repeat units lie at residues 51–72, 75–96, 99–120, 123–144, 147–168, 171–192, 195–216, 219–240, 244–265, and 268–289; these read TTKLLNLQRNNFPVLAANSFRT, NLVSLHLQHCNIREVAAGAFRG, QLIYLYLSHNDIRVLRAGAFDD, ELTYLYLDHNKVSELPRGLLSP, NLFILQLNNNKIRELRAGAFQG, DLRWLYLSENALSSLQPGSLDD, NLAKFHLDKNQLSSYPSAALSK, VVEELKLSHNPLKSIPDNAFQS, YLETLWLDNTNLEKFSDAAFSG, and TLKHVHLDNNRLNQLPSSFPFD. Serine 143 carries O-linked (GalNAc...) serine glycosylation. The region spanning 299–347 is the LRRCT domain; sequence NPWKCTCQLRGLRRWLEAKASRPDATCSSPAKFKGQRIRDTDALRSCKS. Intrachain disulfides connect cysteine 303–cysteine 345 and cysteine 305–cysteine 325. A disordered region spans residues 322-358; sequence DATCSSPAKFKGQRIRDTDALRSCKSPTKRSKKAGRH. Residues 348 to 358 are compositionally biased toward basic residues; that stretch reads PTKRSKKAGRH.

Belongs to the small leucine-rich proteoglycan (SLRP) family. SLRP class IV subfamily. In terms of assembly, mostly monomeric. Interacts with collagen type II. Cartilage.

It localises to the secreted. It is found in the extracellular space. Its subcellular location is the extracellular matrix. Functionally, promotes attachment of chondrocytes, fibroblasts, and osteoblasts. This binding is mediated (at least for chondrocytes and fibroblasts) by the integrin alpha(2)beta(1). May play an important role in the regulation of chondrocyte growth and proliferation. This is Chondroadherin (Chad) from Mus musculus (Mouse).